Here is a 166-residue protein sequence, read N- to C-terminus: MAHHIPPLNFGMVADDLYRSGQPNELNFPFLEKLQLKKIIFLAPDDPSQQFQNFVEDQDIELIHLGMDTHQNPWNPISEEIVISALKIILNPDNYPLHIMCNLGRHRTGTVVGCLRKLQRWNLTSIFEEYRRFAGSKVKLLNEQFIELFDTDLVTYNNAPQWLYLS.

The 154-residue stretch at 9–162 (NFGMVADDLY…LVTYNNAPQW (154 aa)) folds into the Tyrosine-protein phosphatase domain. Catalysis depends on cysteine 101, which acts as the Phosphocysteine intermediate.

This sequence belongs to the protein-tyrosine phosphatase family.

The protein resides in the cytoplasm. The enzyme catalyses O-phospho-L-tyrosyl-[protein] + H2O = L-tyrosyl-[protein] + phosphate. The chain is Probable tyrosine-protein phosphatase DG1060 (DG1060) from Dictyostelium discoideum (Social amoeba).